The following is a 201-amino-acid chain: FMN-dependent NADH:quinone oxidoreductase (201 aa).

FMN-binding positions include Ser10, 16-18 (SQS), 96-99 (MYNF), and 140-143 (SRGG).

Belongs to the azoreductase type 1 family. Homodimer. The cofactor is FMN.

The catalysed reaction is 2 a quinone + NADH + H(+) = 2 a 1,4-benzosemiquinone + NAD(+). It catalyses the reaction N,N-dimethyl-1,4-phenylenediamine + anthranilate + 2 NAD(+) = 2-(4-dimethylaminophenyl)diazenylbenzoate + 2 NADH + 2 H(+). Functionally, quinone reductase that provides resistance to thiol-specific stress caused by electrophilic quinones. Its function is as follows. Also exhibits azoreductase activity. Catalyzes the reductive cleavage of the azo bond in aromatic azo compounds to the corresponding amines. The chain is FMN-dependent NADH:quinone oxidoreductase from Escherichia coli O157:H7.